The primary structure comprises 496 residues: MFS transporter cpaT (496 aa).

Residues 1–45 (MGHQEEPPRICKTPSGHEQGEGPAEKTSKPSTEEVGWDGPTDPAR) are disordered. Basic and acidic residues predominate over residues 18-32 (EQGEGPAEKTSKPST). N48 carries an N-linked (GlcNAc...) asparagine glycan. Residues 58–78 (MGIISYLTFLTPLTSSIVAPA) traverse the membrane as a helical segment. N90 carries N-linked (GlcNAc...) asparagine glycosylation. A run of 5 helical transmembrane segments spans residues 93 to 113 (LASFVVSIYLVGFAVGPLFLA), 130 to 150 (FIFTIWNIAGAVAPNVGALLV), 154 to 174 (FAGISGSGPVTLGAGSVADMF), 180 to 200 (GVAMSLYGLGPLLGPVIGPIA), and 212 to 232 (WVFWLLAIVSGVAVILVLFVL). N252 carries an N-linked (GlcNAc...) asparagine glycan. 6 consecutive transmembrane segments (helical) span residues 288-308 (VALFSLYTGVVFGYLYLLFTT), 325-345 (GLVYIGIGVGALIGISCFGAL), 367-387 (LPPLIPGSFLIPIGLFWYGWS), 395-415 (IMPIIGLGWVGCGMIATLLPI), 427-449 (AASAIAANTVVRSIVGAFLPLAG), and 463-483 (SLLGFVALGLLPVPVVFYFYG).

This sequence belongs to the major facilitator superfamily.

The protein localises to the membrane. Functionally, MFS transporter; part of the gene cluster that mediates the biosynthesis of the fungal neurotoxin cyclopiazonic acid (CPA), a nanomolar inhibitor of Ca(2+)-ATPase with a unique pentacyclic indole tetramic acid scaffold. The polypeptide is MFS transporter cpaT (Aspergillus oryzae (Yellow koji mold)).